A 412-amino-acid polypeptide reads, in one-letter code: ATP phosphoribosyltransferase regulatory subunit (412 aa).

Belongs to the class-II aminoacyl-tRNA synthetase family. HisZ subfamily. As to quaternary structure, heteromultimer composed of HisG and HisZ subunits.

It is found in the cytoplasm. It participates in amino-acid biosynthesis; L-histidine biosynthesis; L-histidine from 5-phospho-alpha-D-ribose 1-diphosphate: step 1/9. Its function is as follows. Required for the first step of histidine biosynthesis. May allow the feedback regulation of ATP phosphoribosyltransferase activity by histidine. This Dehalococcoides mccartyi (strain CBDB1) protein is ATP phosphoribosyltransferase regulatory subunit.